We begin with the raw amino-acid sequence, 280 residues long: Type 1 encapsulin shell protein (280 aa).

Belongs to the encapsulin family. Family 1 subfamily. As to quaternary structure, this encapsulin nanocompartment is formed by 60 subunits; monomers form pentamers which assemble to form shells. There are 12 pores where the pentamers meet as well as 3-fold axis channels and dimer channels; none are larger than 3-4 Angstroms in diameter. The N-terminus of the protein is inside the shell, the C-terminus is outside.

The protein localises to the encapsulin nanocompartment. Shell component of a type 1 encapsulin nanocompartment. Assembles into proteinaceous icosahedral shells 24 nm in diameter in the presence and absence of its ferritin cargo protein. The center of cargo-loaded nanocompartments is loaded with iron. The empty encapsulin nanocompartment sequesters about 2200 Fe ions while the cargo-loaded nanocompartment can maximally sequester about 4150 Fe ions. Does not have any detectable ferroxidase activity. The polypeptide is Type 1 encapsulin shell protein (Rhodospirillum rubrum (strain ATCC 11170 / ATH 1.1.1 / DSM 467 / LMG 4362 / NCIMB 8255 / S1)).